A 169-amino-acid polypeptide reads, in one-letter code: Putative tRNA (cytidine(34)-2'-O)-methyltransferase (169 aa).

V79, G104, I125, and S134 together coordinate S-adenosyl-L-methionine.

This sequence belongs to the class IV-like SAM-binding methyltransferase superfamily. RNA methyltransferase TrmH family. TrmL subfamily.

It localises to the cytoplasm. The enzyme catalyses cytidine(34) in tRNA + S-adenosyl-L-methionine = 2'-O-methylcytidine(34) in tRNA + S-adenosyl-L-homocysteine + H(+). The catalysed reaction is 5-carboxymethylaminomethyluridine(34) in tRNA(Leu) + S-adenosyl-L-methionine = 5-carboxymethylaminomethyl-2'-O-methyluridine(34) in tRNA(Leu) + S-adenosyl-L-homocysteine + H(+). Its function is as follows. Could methylate the ribose at the nucleotide 34 wobble position in tRNA. The polypeptide is Putative tRNA (cytidine(34)-2'-O)-methyltransferase (Lactococcus lactis subsp. cremoris (strain MG1363)).